A 354-amino-acid polypeptide reads, in one-letter code: Guanine nucleotide-binding protein alpha-16 subunit (354 aa).

A lipid anchor (N-myristoyl glycine) is attached at glycine 2. The S-palmitoyl cysteine moiety is linked to residue cysteine 3. In terms of domain architecture, G-alpha spans 31 to 354 (KTVKLLLLGA…RDNLRTCGLY (324 aa)). Residues 34–47 (KLLLLGAGESGKST) are G1 motif. GTP contacts are provided by residues 39–46 (GAGESGKS), 174–180 (LRTRIKT), 199–203 (DVGGQ), 268–271 (NKKD), and alanine 326. Mg(2+) contacts are provided by serine 46 and threonine 180. A G2 motif region spans residues 172 to 180 (DVLRTRIKT). The segment at 195–204 (FVVFDVGGQR) is G3 motif. The G4 motif stretch occupies residues 264–271 (ILFLNKKD). Residues 324 to 329 (TCATDT) form a G5 motif region.

It belongs to the G-alpha family. G proteins are composed of 3 units; alpha, beta and gamma. The alpha chain contains the guanine nucleotide binding site.

Its function is as follows. Guanine nucleotide-binding proteins (G proteins) are involved as modulators or transducers in various transmembrane signaling systems. In the 1-cell embryo, probably together with goa-1, controls nuclear rotation and spindle elongation during mitosis. During the first embryonic cell divisons, plays a role in gpr-1/2 cortical localization and in the proper orientation of EMS blastomere mitotic spindle. This chain is Guanine nucleotide-binding protein alpha-16 subunit (gpa-16), found in Caenorhabditis briggsae.